The following is a 109-amino-acid chain: Encapsulin nanocompartment cargo protein EncD (109 aa).

Residue Glu47 participates in Fe cation binding. Positions 61–94 (AGGRGAAAPTPAREAPAEAPRLARGSADELHEAA) are disordered. A compositionally biased stretch (low complexity) spans 66-85 (AAAPTPAREAPAEAPRLARG). Residues 100–106 (LTVGSLR) form a probable targeting peptide region.

The protein resides in the encapsulin nanocompartment. Functionally, cargo protein of a type 1 encapsulin nanocompartment. May help nucleate Fe atoms in the interior of the encapsulin nanocompartment. Present in about 47 copies/encapsulin nanocompartment. This is Encapsulin nanocompartment cargo protein EncD from Myxococcus xanthus (strain DK1622).